The sequence spans 125 residues: Probable 4-amino-4-deoxy-L-arabinose-phosphoundecaprenol flippase subunit ArnF (125 aa).

The Cytoplasmic segment spans residues 1 to 2 (MG). A helical membrane pass occupies residues 3–23 (VMWGLISVAIASLAQLSLGFA). Residues 24–33 (MMRLPSIAHP) are Periplasmic-facing. The chain crosses the membrane as a helical span at residues 34 to 54 (LAFISGLGALNAATLALFAGL). Residues 55–76 (AGYLVSVFCWHKTLHTLALSKA) lie on the Cytoplasmic side of the membrane. A helical transmembrane segment spans residues 77–97 (YALLSLSYVLVWVASMLLPGL). At 98–100 (QGA) the chain is on the periplasmic side. The chain crosses the membrane as a helical span at residues 101–121 (FSLKAMLGVLCIMAGVMLIFL). The Cytoplasmic portion of the chain corresponds to 122–125 (PARS).

Belongs to the ArnF family. In terms of assembly, heterodimer of ArnE and ArnF.

Its subcellular location is the cell inner membrane. The protein operates within bacterial outer membrane biogenesis; lipopolysaccharide biosynthesis. Translocates 4-amino-4-deoxy-L-arabinose-phosphoundecaprenol (alpha-L-Ara4N-phosphoundecaprenol) from the cytoplasmic to the periplasmic side of the inner membrane. The protein is Probable 4-amino-4-deoxy-L-arabinose-phosphoundecaprenol flippase subunit ArnF of Salmonella agona (strain SL483).